We begin with the raw amino-acid sequence, 342 residues long: MAATSEKQNTTKPPPSPSPLRNSKFCQPNMRILISGGAGFIGSHLVDKLMENEKNEVVVADNYFTGSKENLKKWIGHPRFELIRHDVTEPLLIEVDRIYHLACPASPIFYKYNPVKTIKTNVIGTLNMLGLAKRVGARILLTSTSEVYGDPLIHPQPESYWGNVNPIGVRSCYDEGKRVAETLMFDYHRQHGIEIRIARIFNTYGPRMNIDDGRVVSNFIAQALRGEALTVQKPGTQTRSFCYVSDMVDGLIRLMEGNDTGPINIGNPGEFTMVELAETVKELINPSIEIKMVENTPDDPRQRKPDISKAKEVLGWEPKVKLREGLPLMEEDFRLRLNVPRN.

The span at 1–11 (MAATSEKQNTT) shows a compositional bias: polar residues. The segment at 1–22 (MAATSEKQNTTKPPPSPSPLRN) is disordered. 61 to 86 (DNYFTGSKENLKKWIGHPRFELIRHD) provides a ligand contact to NAD(+). Arginine 170 is a substrate binding site. Tyrosine 173 (proton acceptor) is an active-site residue. 173 to 177 (YDEGK) contacts NAD(+). Asparagine 202 provides a ligand contact to substrate. Position 214 (arginine 214) interacts with NAD(+). Substrate-binding positions include 215–219 (VVSNF), 232–239 (QKPGTQTR), and 299–303 (DPRQR).

It belongs to the NAD(P)-dependent epimerase/dehydratase family. UDP-glucuronic acid decarboxylase subfamily. It depends on NAD(+) as a cofactor. Ubiquitous.

The protein localises to the cytoplasm. The catalysed reaction is UDP-alpha-D-glucuronate + H(+) = UDP-alpha-D-xylose + CO2. It participates in nucleotide-sugar biosynthesis; UDP-alpha-D-xylose biosynthesis; UDP-alpha-D-xylose from UDP-alpha-D-glucuronate: step 1/1. Catalyzes the NAD-dependent decarboxylation of UDP-glucuronic acid to UDP-xylose. Necessary for the biosynthesis of the core tetrasaccharide in glycosaminoglycan biosynthesis. In Arabidopsis thaliana (Mouse-ear cress), this protein is UDP-glucuronic acid decarboxylase 3 (UXS3).